A 1249-amino-acid polypeptide reads, in one-letter code: MAGE-like protein 2 (1249 aa).

Residues 1–10 are compositionally biased toward polar residues; that stretch reads MSQLSKNLGD. Disordered regions lie at residues 1–50, 134–233, 300–327, 349–378, 410–433, 515–569, 647–679, 714–746, 862–910, and 930–957; these read MSQL…PPID, APGA…AQPP, QPPASGAPMAQPAAPPAQPMAPPAQPMA, PQVPQGPQAPPAQLATPPGWQATSPGWQAT, RQGPPPIRPGPPPIRPGPPPVRQA, QALP…LPAP, QPFQGAPPSQKAVQIQLPPQQAQASGPQAEVPT, LMTPSGECRASSIDRRGSSKERRTSSKERRAPS, PQAT…DWQG, and VSGDWEHPNTPRGLSGWEGPSTSRILSG. Pro residues-rich tracts occupy residues 40-49 and 140-233; these read PPVPWDPPPI and AHPP…AQPP. Residues 301-311 show a composition bias toward low complexity; that stretch reads PPASGAPMAQP. Composition is skewed to pro residues over residues 312–324 and 349–358; these read AAPPAQPMAPPAQ and PQVPQGPQAP. Over residues 369–378 the composition is skewed to polar residues; sequence QATSPGWQAT. Pro residues predominate over residues 410 to 432; the sequence is RQGPPPIRPGPPPIRPGPPPVRQ. The span at 525-552 shows a compositional bias: low complexity; sequence QAPQARLPAPQVQAAPQVPTAPPATQVP. The segment covering 553 to 567 has biased composition (pro residues); that stretch reads AAPPAGPQVPQPVLP. Low complexity predominate over residues 662–675; it reads QLPPQQAQASGPQA. Basic and acidic residues predominate over residues 725 to 746; sequence SIDRRGSSKERRTSSKERRAPS. A compositionally biased stretch (low complexity) spans 862 to 871; that stretch reads PQATATTQEA. Residues 881 to 891 show a composition bias toward basic residues; the sequence is RSGKATRKKKH. Positions 1020 to 1219 constitute an MAGE domain; that stretch reads LDERANALVQ…QSWPFHYLEA (200 aa). Positions 1226–1235 are enriched in acidic residues; it reads EDTDEDEPDT. The interval 1226 to 1249 is disordered; that stretch reads EDTDEDEPDTGDSAHGPTSRPPPR.

Part of a complex consisting of MAGEL2, TRIM27 and USP7; directly interacts with USP7. Interacts with TRIM27. Interacts with VPS35; leading to recruitment at retromer-containing endosomes. Interacts with BMAL1 and PER2. In terms of tissue distribution, expressed in placenta, fetal and adult brain. Not detected in heart and small intestine, very low levels in fibroblasts. Not expressed in brain of a Prader-Willi patient.

The protein localises to the early endosome. Its subcellular location is the cytoplasm. It localises to the nucleus. Probably enhances ubiquitin ligase activity of RING-type zinc finger-containing E3 ubiquitin-protein ligases, possibly through recruitment and/or stabilization of the Ubl-conjugating enzyme (E2) at the E3:substrate complex. Acts as a regulator of retrograde transport via its interaction with VPS35. Recruited to retromer-containing endosomes and promotes the formation of 'Lys-63'-linked polyubiquitin chains at 'Lys-220' of WASHC1 together with TRIM27, leading to promote endosomal F-actin assembly. Regulates the circadian clock by repressing the transcriptional activator activity of the CLOCK-BMAL1 heterodimer. Significantly promotes the cytoplasmic accumulation of CLOCK. The chain is MAGE-like protein 2 (MAGEL2) from Homo sapiens (Human).